The primary structure comprises 493 residues: ATP synthase subunit beta (493 aa).

169 to 176 (GGAGVGKT) is an ATP binding site.

Belongs to the ATPase alpha/beta chains family. F-type ATPases have 2 components, CF(1) - the catalytic core - and CF(0) - the membrane proton channel. CF(1) has five subunits: alpha(3), beta(3), gamma(1), delta(1), epsilon(1). CF(0) has three main subunits: a(1), b(2) and c(9-12). The alpha and beta chains form an alternating ring which encloses part of the gamma chain. CF(1) is attached to CF(0) by a central stalk formed by the gamma and epsilon chains, while a peripheral stalk is formed by the delta and b chains.

The protein resides in the cell inner membrane. The enzyme catalyses ATP + H2O + 4 H(+)(in) = ADP + phosphate + 5 H(+)(out). Functionally, produces ATP from ADP in the presence of a proton gradient across the membrane. The catalytic sites are hosted primarily by the beta subunits. This chain is ATP synthase subunit beta, found in Gluconacetobacter diazotrophicus (strain ATCC 49037 / DSM 5601 / CCUG 37298 / CIP 103539 / LMG 7603 / PAl5).